The chain runs to 403 residues: Soluble calcium-activated nucleotidase 1 (403 aa).

The Cytoplasmic segment spans residues Met1–Arg44. A helical; Signal-anchor for type II membrane protein membrane pass occupies residues Val45–Ser61. At His62–Ile403 the chain is on the lumenal side. The N-linked (GlcNAc...) asparagine glycan is linked to Asn90. Ca(2+) is bound by residues Ser170, Asp171, Glu217, Glu286, Ser347, and Glu398.

The protein belongs to the apyrase family. In terms of assembly, monomer. Homodimer; dimerization is Ca(2+)-dependent. Ca(2+) is required as a cofactor.

It is found in the endoplasmic reticulum membrane. Its subcellular location is the golgi apparatus. It localises to the golgi stack membrane. The enzyme catalyses a ribonucleoside 5'-diphosphate + H2O = a ribonucleoside 5'-phosphate + phosphate + H(+). In terms of biological role, calcium-dependent nucleotidase with a preference for UDP. The order of activity with different substrates is UDP &gt; GDP &gt; IDP &gt;&gt; UTP &gt; CDP = GTP = ITP. Has very low activity towards ADP and even lower activity towards ATP. Does not hydrolyze AMP and GMP. Involved in proteoglycan synthesis. The sequence is that of Soluble calcium-activated nucleotidase 1 (Cant1) from Mus musculus (Mouse).